A 209-amino-acid polypeptide reads, in one-letter code: Small ribosomal subunit protein uS4 (209 aa).

In terms of domain architecture, S4 RNA-binding spans 99–162 (RRLDNVVYRL…RESNKFQEMK (64 aa)).

Belongs to the universal ribosomal protein uS4 family. Part of the 30S ribosomal subunit. Contacts protein S5. The interaction surface between S4 and S5 is involved in control of translational fidelity.

Its function is as follows. One of the primary rRNA binding proteins, it binds directly to 16S rRNA where it nucleates assembly of the body of the 30S subunit. Functionally, with S5 and S12 plays an important role in translational accuracy. The sequence is that of Small ribosomal subunit protein uS4 from Syntrophomonas wolfei subsp. wolfei (strain DSM 2245B / Goettingen).